Here is a 151-residue protein sequence, read N- to C-terminus: Caveolin-3 (151 aa).

Topologically, residues 1 to 83 are cytoplasmic; sequence MMTEEHTDLE…RLLSTLLGVP (83 aa). A Glycyl lysine isopeptide (Lys-Gly) (interchain with G-Cter in SUMO3) cross-link involves residue Lys38. Residues 84–104 constitute an intramembrane region (helical); it reads LALLWGFLFACISFCHIWAVV. Residues 105-151 are Cytoplasmic-facing; it reads PCIKSYLIEIQCISHIYSLCIRTFCNPLFAALGQVCSNIKVVLRREG.

Belongs to the caveolin family. Homooligomer. Interacts with DYSF. Interacts with DLG1 and KCNA5; forms a ternary complex. Interacts with DAG1 (via its C-terminal); the interaction prevents binding of DAG1 with DMD. Interacts with TRIM72. Interacts with MUSK; may regulate MUSK signaling. Interacts with POPDC1. Interacts with CAVIN1, CAVIN2 and CAVIN4. Post-translationally, sumoylation with SUMO3 by PIAS4 may reduce agonist-induced internalization and desensitization of adrenergic receptor ABRD2. Expressed predominantly in muscle.

Its subcellular location is the golgi apparatus membrane. It localises to the cell membrane. The protein localises to the membrane. It is found in the caveola. The protein resides in the sarcolemma. May act as a scaffolding protein within caveolar membranes. Interacts directly with G-protein alpha subunits and can functionally regulate their activity. May also regulate voltage-gated potassium channels. Plays a role in the sarcolemma repair mechanism of both skeletal muscle and cardiomyocytes that permits rapid resealing of membranes disrupted by mechanical stress. Mediates the recruitment of CAVIN2 and CAVIN3 proteins to the caveolae. This is Caveolin-3 (Cav3) from Rattus norvegicus (Rat).